Reading from the N-terminus, the 366-residue chain is Ribosomal RNA large subunit methyltransferase M (366 aa).

Residues S188, 221-224 (CPGG), D240, D260, and D277 each bind S-adenosyl-L-methionine. K306 acts as the Proton acceptor in catalysis.

The protein belongs to the class I-like SAM-binding methyltransferase superfamily. RNA methyltransferase RlmE family. RlmM subfamily. Monomer.

It localises to the cytoplasm. The enzyme catalyses cytidine(2498) in 23S rRNA + S-adenosyl-L-methionine = 2'-O-methylcytidine(2498) in 23S rRNA + S-adenosyl-L-homocysteine + H(+). Catalyzes the 2'-O-methylation at nucleotide C2498 in 23S rRNA. This is Ribosomal RNA large subunit methyltransferase M from Cronobacter sakazakii (strain ATCC BAA-894) (Enterobacter sakazakii).